The primary structure comprises 204 residues: Thymidine kinase (204 aa).

Residues 15–22 and 88–91 contribute to the ATP site; these read GSMFSGKS and DEVQ. Catalysis depends on Glu89, which acts as the Proton acceptor. The Zn(2+) site is built by Cys145, Cys148, Cys183, and Cys186.

Belongs to the thymidine kinase family. As to quaternary structure, homotetramer.

It localises to the cytoplasm. The catalysed reaction is thymidine + ATP = dTMP + ADP + H(+). This chain is Thymidine kinase, found in Halalkalibacterium halodurans (strain ATCC BAA-125 / DSM 18197 / FERM 7344 / JCM 9153 / C-125) (Bacillus halodurans).